A 632-amino-acid polypeptide reads, in one-letter code: Chaperone protein HtpG (632 aa).

Residues 1–339 (MAHETMSFQA…SADLPLNVSR (339 aa)) form an a; substrate-binding region. The tract at residues 340 to 559 (EILQESRDVK…DNDMSGYLQR (220 aa)) is b. A c region spans residues 560 to 632 (MLKAAGQNAP…TNALLLSRAA (73 aa)).

This sequence belongs to the heat shock protein 90 family. As to quaternary structure, homodimer.

The protein resides in the cytoplasm. In terms of biological role, molecular chaperone. Has ATPase activity. The polypeptide is Chaperone protein HtpG (Burkholderia lata (strain ATCC 17760 / DSM 23089 / LMG 22485 / NCIMB 9086 / R18194 / 383)).